Reading from the N-terminus, the 327-residue chain is Phenylalanine--tRNA ligase alpha subunit (327 aa).

A Mg(2+)-binding site is contributed by E252.

This sequence belongs to the class-II aminoacyl-tRNA synthetase family. Phe-tRNA synthetase alpha subunit type 1 subfamily. Tetramer of two alpha and two beta subunits. Requires Mg(2+) as cofactor.

It localises to the cytoplasm. The enzyme catalyses tRNA(Phe) + L-phenylalanine + ATP = L-phenylalanyl-tRNA(Phe) + AMP + diphosphate + H(+). In Shewanella frigidimarina (strain NCIMB 400), this protein is Phenylalanine--tRNA ligase alpha subunit.